We begin with the raw amino-acid sequence, 492 residues long: Amphoterin-induced protein 1 (492 aa).

The signal sequence occupies residues 1-27 (MQPQRDLRGLWLLLLSVFLLLFEVARA). One can recognise an LRRNT domain in the interval 28 to 61 (GRSVVSCPANCLCASNILSCSKQQLPNVPQSLPS). At 28-371 (GRSVVSCPAN…LHGHHDTLNT (344 aa)) the chain is on the extracellular side. 2 disulfides stabilise this stretch: Cys34–Cys40 and Cys38–Cys47. 6 LRR repeats span residues 62–83 (YTAL…WTPT), 87–108 (NLHS…AFVP), 111–132 (NLRY…LFSD), 135–156 (ALEV…AFED), 159–180 (QLQK…LIKD), and 186–206 (KLML…TDLQ). The N-linked (GlcNAc...) asparagine glycan is linked to Asn72. One can recognise an LRRCT domain in the interval 208-272 (LPAWVKNGLY…FSLDFFNCSE (65 aa)). 3 disulfide bridges follow: Cys225–Cys253, Cys227–Cys270, and Cys290–Cys340. N-linked (GlcNAc...) asparagine glycans are attached at residues Asn269, Asn315, Asn348, and Asn359. An Ig-like C2-type domain is found at 269–352 (NCSEYKESAW…MGETFNETLS (84 aa)). The chain crosses the membrane as a helical span at residues 372–392 (AYTTLVGCILSVVLVLIYLYL). At 393–492 (TPCRCWCRGV…SVFSDTPIVV (100 aa)) the chain is on the cytoplasmic side. A disordered region spans residues 404–492 (KPSSHQGDSL…SVFSDTPIVV (89 aa)). Residues 407–423 (SHQGDSLSSSMLSTTPN) are compositionally biased toward polar residues. The span at 430 to 441 (GDKDDGFDRRVA) shows a compositional bias: basic and acidic residues. Ser476 and Ser480 each carry phosphoserine.

This sequence belongs to the immunoglobulin superfamily. AMIGO family. Homodimer, and heterodimer with AMIGO2 and AMIGO3. Interacts with KCNB1. As to expression, expressed in hippocampal and cortical neurons (at protein level). High levels in cerebellum, cerebrum, and retina. Low levels in liver, kidney, small intestine, spleen, lung and heart.

The protein localises to the cell membrane. It localises to the perikaryon. Its subcellular location is the cell projection. The protein resides in the dendrite. Promotes growth and fasciculation of neurites from cultured hippocampal neurons. May be involved in fasciculation as well as myelination of developing neural axons. May have a role in regeneration as well as neural plasticity in the adult nervous system. May mediate homophilic as well as heterophilic cell-cell interaction and contribute to signal transduction through its intracellular domain. Assembled with KCNB1 modulates the gating characteristics of the delayed rectifier voltage-dependent potassium channel KCNB1. The polypeptide is Amphoterin-induced protein 1 (Mus musculus (Mouse)).